The primary structure comprises 207 residues: ATP-dependent dethiobiotin synthetase BioD (207 aa).

13 to 18 (EVGKTV) is an ATP binding site. Residue threonine 17 coordinates Mg(2+). Residue lysine 33 is part of the active site. ATP-binding positions include aspartate 44 and 100 to 103 (EGAG). Mg(2+)-binding residues include aspartate 44 and glutamate 100.

It belongs to the dethiobiotin synthetase family. In terms of assembly, homodimer. The cofactor is Mg(2+).

The protein localises to the cytoplasm. The catalysed reaction is (7R,8S)-7,8-diammoniononanoate + CO2 + ATP = (4R,5S)-dethiobiotin + ADP + phosphate + 3 H(+). The protein operates within cofactor biosynthesis; biotin biosynthesis; biotin from 7,8-diaminononanoate: step 1/2. Functionally, catalyzes a mechanistically unusual reaction, the ATP-dependent insertion of CO2 between the N7 and N8 nitrogen atoms of 7,8-diaminopelargonic acid (DAPA, also called 7,8-diammoniononanoate) to form a ureido ring. The protein is ATP-dependent dethiobiotin synthetase BioD of Christiangramia forsetii (strain DSM 17595 / CGMCC 1.15422 / KT0803) (Gramella forsetii).